We begin with the raw amino-acid sequence, 131 residues long: Proline-rich protein 3 (131 aa).

Residues 1 to 77 (LHRGPPGSRG…KEQRNPRRLK (77 aa)) are disordered. Pro residues predominate over residues 12–25 (MIPPLLSLPPPPRG). A compositionally biased stretch (gly residues) spans 28–44 (PLRGGLGPRSGPYGRGW). The segment at 98–126 (KSDRPVCRHFAKKGHCRYEDLCAFYHPGA) adopts a C3H1-type zinc-finger fold.

The chain is Proline-rich protein 3 (PRR3) from Sus scrofa (Pig).